The following is a 287-amino-acid chain: Bifunctional protein FolD (287 aa).

Residues 160 to 162 (GRS), serine 189, and threonine 230 each bind NADP(+).

This sequence belongs to the tetrahydrofolate dehydrogenase/cyclohydrolase family. In terms of assembly, homodimer.

It carries out the reaction (6R)-5,10-methylene-5,6,7,8-tetrahydrofolate + NADP(+) = (6R)-5,10-methenyltetrahydrofolate + NADPH. The catalysed reaction is (6R)-5,10-methenyltetrahydrofolate + H2O = (6R)-10-formyltetrahydrofolate + H(+). It functions in the pathway one-carbon metabolism; tetrahydrofolate interconversion. In terms of biological role, catalyzes the oxidation of 5,10-methylenetetrahydrofolate to 5,10-methenyltetrahydrofolate and then the hydrolysis of 5,10-methenyltetrahydrofolate to 10-formyltetrahydrofolate. In Chlamydia caviae (strain ATCC VR-813 / DSM 19441 / 03DC25 / GPIC) (Chlamydophila caviae), this protein is Bifunctional protein FolD.